A 374-amino-acid polypeptide reads, in one-letter code: MRSASIILDSKALTHNLNCVIDTVPDTTKVLAMVKADAYGHGIAHCLPALKDADGLGVACFTEAQHIRELGWDKILVLIEGVFSETEWQQSIEAQCQSIIHHQDQVQWALNHLPPENSPCRTVWLKLNTGMNRLGFESDELGDVAQSLVDAGYELILTSHFANADAPNHPSNAKQIDTFTQALQQLREQVDPSIKASLCNSAGILNFKACHFDWVRPGIMLYGSSPVEGVSAQMLKLKPVMSFKASLMAIHNIAAGTSVGYGSRFVANRPIVKGIVSIGYGDGYPRVVDGSAWVSVQLAGEHSSYKCPVIGRVAMDMIAIDLTDVPNPKVGSQVMLWGDPELGAPSVDEIAESAHTLGYELLCRVTQRPLREVL.

Lys-35 (proton acceptor; specific for D-alanine) is an active-site residue. Lys-35 bears the N6-(pyridoxal phosphate)lysine mark. Arg-133 contributes to the substrate binding site. The Proton acceptor; specific for L-alanine role is filled by Tyr-261. Position 315 (Met-315) interacts with substrate.

Belongs to the alanine racemase family. The cofactor is pyridoxal 5'-phosphate.

The catalysed reaction is L-alanine = D-alanine. It functions in the pathway amino-acid biosynthesis; D-alanine biosynthesis; D-alanine from L-alanine: step 1/1. Functionally, catalyzes the interconversion of L-alanine and D-alanine. May also act on other amino acids. This Psychrobacter sp. (strain PRwf-1) protein is Alanine racemase (alr).